Here is a 334-residue protein sequence, read N- to C-terminus: Phospholipase A1 1 (334 aa).

Residues 1-23 (MMNLKYLLFFCLVQALHYCYAYG) form the signal peptide. The propeptide occupies 24–33 (DPSLSNELDR). Cysteine 37 and cysteine 120 are disulfide-bonded. The Nucleophile role is filled by serine 170. The Charge relay system role is filled by aspartate 198. 2 cysteine pairs are disulfide-bonded: cysteine 209–cysteine 214 and cysteine 252–cysteine 261. The active-site Charge relay system is the histidine 263. Cystine bridges form between cysteine 278–cysteine 302, cysteine 279–cysteine 327, and cysteine 295–cysteine 300.

The protein belongs to the AB hydrolase superfamily. Lipase family. In terms of processing, not glycosylated. In terms of tissue distribution, expressed by the venom gland.

The protein resides in the secreted. It carries out the reaction a 1,2-diacyl-sn-glycero-3-phosphocholine + H2O = a 2-acyl-sn-glycero-3-phosphocholine + a fatty acid + H(+). Its function is as follows. Catalyzes the hydrolysis of phosphatidylcholine with phospholipase A1 activity (3.6 U/ml). May act as an allergen and induce hemolytic activity. In vivo, a mixture of this protein and Ves a 1.02 is able to paralyze crickets. This is Phospholipase A1 1 from Vespa affinis (Lesser banded hornet).